Consider the following 116-residue polypeptide: Cysteine proteinase inhibitor 1 (116 aa).

Residues 1-26 (MVPKPLSLLLFLLLALSAAVVGGRKL) form the signal peptide. The Cystatin domain occupies 30 to 89 (GGWRPIESLNSAEVQDVAQFAVSEHNKQANDELQYQSVVRGYTQVVAGTNYRLVIAAKDG). A Secondary area of contact motif is present at residues 73 to 77 (QVVAG). Asparagine 109 is a glycosylation site (N-linked (GlcNAc...) asparagine).

The protein belongs to the cystatin family. Phytocystatin subfamily. In terms of processing, glycosylated.

It localises to the secreted. Specific inhibitor of papain family cysteine proteinases. Inhibits papain, chymopapain, bromelain, ficin, human cathepsins B, H and L, actinidain and house dustmite endopeptidase 1, but does not inhibit human bleomycin hydrolase. Inhibits papain with an IC(50) of 2.47 nM. Does not inhibit cysteine proteinases belonging to other families including clostripain, streptopain and calpain. This chain is Cysteine proteinase inhibitor 1, found in Actinidia deliciosa (Kiwi).